The following is a 383-amino-acid chain: F-box/kelch-repeat protein At2g22030 (383 aa).

The 49-residue stretch at 23–71 folds into the F-box domain; the sequence is SLLFSSLPYDVVLNCLARVSRRYYPNLSCVSKSFQSLVRSPELAHMRSL. Kelch repeat units lie at residues 130–175, 176–220, and 269–317; these read KIYF…VVNG, KLYV…LMRY, and GVCV…GMVD.

This Arabidopsis thaliana (Mouse-ear cress) protein is F-box/kelch-repeat protein At2g22030.